Consider the following 156-residue polypeptide: Endoribonuclease YbeY (156 aa).

Residues His122, His126, and His132 each coordinate Zn(2+).

Belongs to the endoribonuclease YbeY family. Zn(2+) is required as a cofactor.

It localises to the cytoplasm. Functionally, single strand-specific metallo-endoribonuclease involved in late-stage 70S ribosome quality control and in maturation of the 3' terminus of the 16S rRNA. This Geobacillus thermodenitrificans (strain NG80-2) protein is Endoribonuclease YbeY.